A 159-amino-acid chain; its full sequence is Protein A40 (159 aa).

Residues 1–9 (MNKHKTDYA) lie on the Cytoplasmic side of the membrane. The chain crosses the membrane as a helical; Signal-anchor for type II membrane protein span at residues 10-30 (GYACCVICGLIVGIIFTATLL). At 31–159 (KVVERKLVHT…TPKLHSCYTI (129 aa)) the chain is on the extracellular side. Positions 63–159 (YNNKCIHLST…TPKLHSCYTI (97 aa)) constitute a C-type lectin domain.

This sequence belongs to the poxviridae A40 protein family.

The protein resides in the host membrane. In Bos taurus (Bovine), this protein is Protein A40.